A 220-amino-acid polypeptide reads, in one-letter code: MFLRRMKAELINPEQALPGRPIAMPVADRHEVLGTPLAGPFPEGTQVAVFGMGCFWGAERLFWTLPGVLTTSVGYAGGYTPNPSYEEVCSGRTGHAEVVQVRYDPTKIAYEDLLKVFWENHDPTQGMRQGNDVGTQYRSAIYTTTEEQLTAAQASRDAFAPVVARAGKGEITTEIGPLGDYYFAEDYHQQYLAPTKNPGGYCNHGPNGLSCPVGVARTTG.

C54 is an active-site residue.

It belongs to the MsrA Met sulfoxide reductase family.

It carries out the reaction L-methionyl-[protein] + [thioredoxin]-disulfide + H2O = L-methionyl-(S)-S-oxide-[protein] + [thioredoxin]-dithiol. The catalysed reaction is [thioredoxin]-disulfide + L-methionine + H2O = L-methionine (S)-S-oxide + [thioredoxin]-dithiol. Functionally, has an important function as a repair enzyme for proteins that have been inactivated by oxidation. Catalyzes the reversible oxidation-reduction of methionine sulfoxide in proteins to methionine. The protein is Peptide methionine sulfoxide reductase MsrA of Salinispora arenicola (strain CNS-205).